A 236-amino-acid chain; its full sequence is Ascorbate-specific transmembrane electron transporter 1 (236 aa).

Residues 1–11 lie on the Cytoplasmic side of the membrane; that stretch reads MGLGLGVRAAP. A helical membrane pass occupies residues 12-32; the sequence is FTYAAHALAVAAAAMVLVWSI. Residues 15–219 enclose the Cytochrome b561 domain; sequence AAHALAVAAA…FGASVVVAAI (205 aa). Topologically, residues 33 to 50 are extracellular; it reads QFRGGLAIESTNKNLIFN. The helical transmembrane segment at 51–71 threads the bilayer; sequence VHPVLMLIGYVIIGGEAIMVY. Histidine 52 contributes to the heme b binding site. 67–75 is an L-ascorbate binding site; it reads AIMVYRVLP. Residues 72–84 are Cytoplasmic-facing; the sequence is RVLPTSNHDTTKL. The chain crosses the membrane as a helical span at residues 85 to 105; that stretch reads IHLILHGIALVLGAVGIYFAF. Residues histidine 86 and histidine 120 each contribute to the heme b site. The Extracellular segment spans residues 106–122; sequence KNHNESGIANLYSLHSW. Residue 116-125 coordinates monodehydro-L-ascorbate radical; it reads LYSLHSWIGI. The chain crosses the membrane as a helical span at residues 123–143; sequence IGIGTITLYGIQWIIGFVTFF. The Cytoplasmic portion of the chain corresponds to 144 to 153; it reads FPGAAPNVKK. A helical transmembrane segment spans residues 154–174; that stretch reads GVLPWHVLFGLFVYILALANA. Histidine 159 is a binding site for heme b. The Extracellular segment spans residues 175 to 201; it reads ELGFLEKLTFLESSGLDKYGTEAFLVN. Residues 202-222 form a helical membrane-spanning segment; sequence FTALVVVLFGASVVVAAIAPV. The Cytoplasmic segment spans residues 223-236; that stretch reads RLEEPQGYDPIPEN.

It depends on heme b as a cofactor.

The protein localises to the membrane. With respect to regulation, inhibited by diethylpyrocarbonate. In terms of biological role, two-heme-containing cytochrome. Catalyzes ascorbate-dependent trans-membrane electron transfer by utilizing a concerted H(+)/e(-) transfer mechanism. In Zea mays (Maize), this protein is Ascorbate-specific transmembrane electron transporter 1 (ZCYB).